The sequence spans 327 residues: Gonadotropin-releasing hormone receptor (327 aa).

Topologically, residues 1–38 (MANNASLEQDPNHCSAINNSIPLIQGKLPTLTVSGKIR) are extracellular. Asn4 and Asn18 each carry an N-linked (GlcNAc...) asparagine glycan. A helical transmembrane segment spans residues 39-58 (VTVTFFLFLLSTAFNASFLL). Residues 59–77 (KLQKWTQKRKKGKKLSRMK) are Cytoplasmic-facing. A helical membrane pass occupies residues 78–97 (VLLKHLTLANLLETLIVMPL). Topologically, residues 98–115 (DGMWNITVQWYAGEFLCK) are extracellular. Asn102 carries N-linked (GlcNAc...) asparagine glycosylation. A disulfide bridge connects residues Cys114 and Cys195. Residues 116–137 (VLSYLKLFSMYAPAFMMVVISL) traverse the membrane as a helical segment. The Cytoplasmic segment spans residues 138-164 (DRSLAITQPLAVQSNSKLEQSMISLAW). The chain crosses the membrane as a helical span at residues 165–184 (ILSIVFAGPQLYIFRMIYLA). The Extracellular portion of the chain corresponds to 185-211 (DGSGPTVFSQCVTHCSFPQWWHQAFYN). The chain crosses the membrane as a helical span at residues 212-231 (FFTFGCLFIIPLLIMLICNA). Residues 232 to 280 (KIIFALTRVLHQDPRKLQLNQSKNNIPRARLRTLKMTVAFATSFVVCWT) lie on the Cytoplasmic side of the membrane. Residues 281 to 299 (PYYVLGIWYWFDPEMLNRV) form a helical membrane-spanning segment. At 300–305 (SEPVNH) the chain is on the extracellular side. Residues 306–325 (FFFLFAFLNPCFDPLIYGYF) form a helical membrane-spanning segment. Residues 326 to 327 (SL) are Cytoplasmic-facing.

This sequence belongs to the G-protein coupled receptor 1 family. In terms of tissue distribution, pituitary gland.

It is found in the cell membrane. In terms of biological role, receptor for gonadotropin releasing hormone (GnRH) that mediates the action of GnRH to stimulate the secretion of the gonadotropic hormones luteinizing hormone (LH) and follicle-stimulating hormone (FSH). This receptor mediates its action by association with G-proteins that activate a phosphatidylinositol-calcium second messenger system. This chain is Gonadotropin-releasing hormone receptor (Gnrhr), found in Mus musculus (Mouse).